The chain runs to 268 residues: Putative F-box protein At3g23420 (268 aa).

The region spanning 5-51 (PRDLSDLPRNMAEEVLSRVPMTSLRRLRFTCKKWNTLSRCRSFAKKH) is the F-box domain.

The chain is Putative F-box protein At3g23420 from Arabidopsis thaliana (Mouse-ear cress).